A 22-amino-acid chain; its full sequence is thr operon leader peptide (22 aa).

Belongs to the thr operon leader peptide family.

Its function is as follows. This protein is involved in control of the biosynthesis of threonine. In Klebsiella pneumoniae (strain 342), this protein is thr operon leader peptide.